The chain runs to 515 residues: 2,3-bisphosphoglycerate-independent phosphoglycerate mutase 1 (515 aa).

Residues Asp14 and Ser64 each contribute to the Mn(2+) site. The Phosphoserine intermediate role is filled by Ser64. Residues His125, 155–156 (RD), Arg187, Arg193, 264–267 (RADR), and Lys337 contribute to the substrate site. Mn(2+) is bound by residues Asp404, His408, Asp445, His446, and His464.

Belongs to the BPG-independent phosphoglycerate mutase family. Mn(2+) serves as cofactor.

The catalysed reaction is (2R)-2-phosphoglycerate = (2R)-3-phosphoglycerate. It participates in carbohydrate degradation; glycolysis; pyruvate from D-glyceraldehyde 3-phosphate: step 3/5. Functionally, catalyzes the interconversion of 2-phosphoglycerate and 3-phosphoglycerate. This chain is 2,3-bisphosphoglycerate-independent phosphoglycerate mutase 1, found in Methanosarcina acetivorans (strain ATCC 35395 / DSM 2834 / JCM 12185 / C2A).